A 287-amino-acid polypeptide reads, in one-letter code: Protein TMEPAI (287 aa).

Residues 1–40 (MHRLMGVNSTAAAAAGQPNVSCTCNCKRSLFQSMEITELE) are Lumenal-facing. A helical membrane pass occupies residues 41–63 (FVQIIIIVVVMMVMVVVITCLLS). Topologically, residues 64–287 (HYKLSARSFI…EKDKQKGHPL (224 aa)) are cytoplasmic. A PPxY motif 1 motif is present at residues 158–161 (PPPY). The SMAD interaction motif (SIM) signature appears at 186-189 (PPNR). Positions 229–232 (PPTY) match the PPxY motif 2 motif. The segment at 239–258 (YPGSSFQHQQSSGPPSLLEG) is disordered. Residues 242 to 252 (SSFQHQQSSGP) are compositionally biased toward polar residues.

The protein belongs to the PMEPA1 family. As to quaternary structure, interacts with NEDD4 (via PPxY motifs). Interacts with AR. Interacts with LDLRAD4. Interacts (via the SMAD interaction motif) with SMAD2 and SMAD3. As to expression, highest expression in prostate. Also expressed in ovary.

It is found in the early endosome membrane. It localises to the golgi apparatus membrane. In terms of biological role, functions as a negative regulator of TGF-beta signaling and thereby probably plays a role in cell proliferation, differentiation, apoptosis, motility, extracellular matrix production and immunosuppression. In the canonical TGF-beta pathway, ZFYVE9/SARA recruits the intracellular signal transducer and transcriptional modulators SMAD2 and SMAD3 to the TGF-beta receptor. Phosphorylated by the receptor, SMAD2 and SMAD3 then form a heteromeric complex with SMAD4 that translocates to the nucleus to regulate transcription. Through interaction with SMAD2 and SMAD3, LDLRAD4 may compete with ZFYVE9 and SMAD4 and prevent propagation of the intracellular signal. Also involved in down-regulation of the androgen receptor (AR), enhancing ubiquitination and proteasome-mediated degradation of AR, probably by recruiting NEDD4. In Homo sapiens (Human), this protein is Protein TMEPAI (PMEPA1).